A 213-amino-acid chain; its full sequence is Nucleoside triphosphate pyrophosphatase (213 aa).

Catalysis depends on aspartate 77, which acts as the Proton acceptor.

Belongs to the Maf family. Requires a divalent metal cation as cofactor.

The protein resides in the cytoplasm. It catalyses the reaction a ribonucleoside 5'-triphosphate + H2O = a ribonucleoside 5'-phosphate + diphosphate + H(+). The catalysed reaction is a 2'-deoxyribonucleoside 5'-triphosphate + H2O = a 2'-deoxyribonucleoside 5'-phosphate + diphosphate + H(+). In terms of biological role, nucleoside triphosphate pyrophosphatase. May have a dual role in cell division arrest and in preventing the incorporation of modified nucleotides into cellular nucleic acids. The sequence is that of Nucleoside triphosphate pyrophosphatase from Cutibacterium acnes (strain DSM 16379 / KPA171202) (Propionibacterium acnes).